A 284-amino-acid polypeptide reads, in one-letter code: RCS-specific HTH-type transcriptional activator RclR (284 aa).

A disulfide bridge links C21 with C89. Positions 177 to 278 constitute an HTH araC/xylS-type domain; that stretch reads PRLGAVIQQM…GCTPGEYRER (102 aa). 2 consecutive DNA-binding regions (H-T-H motif) follow at residues 197-218 and 245-268; these read ESLA…RDVS and VVVI…VREF.

With respect to regulation, oxydation of Cys-21 leads to partial activation of RclR, followed by the formation of an intramolecular disulfide bond between Cys-21 and Cys-89, which stabilizes the active form of RclR. Functionally, involved in reactive chlorine species (RCS) stress resistance. Up-regulates, in response to hypochlorous acid (HOCl), the expression of three genes essential for survival of RCS stress (rclA, rclB and rclC) and its own expression. This Escherichia coli (strain K12) protein is RCS-specific HTH-type transcriptional activator RclR (rclR).